Reading from the N-terminus, the 605-residue chain is Formin-binding protein 1-like (605 aa).

The F-BAR domain maps to 1 to 263 (MSWGTELWDQ…AAKSVDERRD (263 aa)). A coiled-coil region spans residues 66-258 (FTSCIAFFNI…EGMILAAKSV (193 aa)). The tract at residues 245 to 535 (SKCLEGMILA…EFDDEFEDDD (291 aa)) is interaction with CDC42. Position 295 is a phosphoserine (serine 295). The stretch at 392-484 (LEDFSHLPPE…VEGKTGIRGD (93 aa)) forms a coiled coil. The region spanning 397-474 (HLPPEQRRKK…IHKNEAWLSE (78 aa)) is the REM-1 domain. Residues 482-538 (RGDRRHSSDINHLVTQGRESPEGSYTDDANQEVRGPPQQHGHHSEFDDEFEDDDPLP) form a disordered region. Phosphoserine occurs at positions 488, 501, and 505. An interaction with DNM1 region spans residues 522–605 (GHHSEFDDEF…VTLEKSSKGS (84 aa)). A compositionally biased stretch (acidic residues) spans 527-536 (FDDEFEDDDP). In terms of domain architecture, SH3 spans 538–599 (PAIGHCKAIY…PTTYIDVTLE (62 aa)). The interval 541–597 (GHCKAIYPFDGHNEGTLAMKEGEVLYIIEEDKGDGWTRARRQNGEEGYVPTTYIDVT) is interaction with DNM2 and WASL. Positions 541 to 605 (GHCKAIYPFD…VTLEKSSKGS (65 aa)) are interaction with DAAM1, DIAPH1 and DIAPH2.

The protein belongs to the FNBP1 family. Homodimerizes, the dimers can polymerize end-to-end to form filamentous structures. Interacts with GTP-bound CDC42. Interacts with DAAM1, DIAPH1, DIAPH2, DNM1, DNM2 and WASL/N-WASP. Interacts with ATG3. Interacts (via SH3 domain) with ABI1, WASF2, CDC42 and WIPF1.

It is found in the cytoplasm. The protein resides in the cytoskeleton. Its subcellular location is the cell cortex. It localises to the cytoplasmic vesicle. The protein localises to the cell membrane. In terms of biological role, required to coordinate membrane tubulation with reorganization of the actin cytoskeleton during endocytosis. May bind to lipids such as phosphatidylinositol 4,5-bisphosphate and phosphatidylserine and promote membrane invagination and the formation of tubules. Also promotes CDC42-induced actin polymerization by activating the WASL-WASPIP complex, the predominant form of WASL/N-WASP in cells. Actin polymerization may promote the fission of membrane tubules to form endocytic vesicles. Essential for autophagy of intracellular bacterial pathogens. The polypeptide is Formin-binding protein 1-like (Fnbp1l) (Mus musculus (Mouse)).